Reading from the N-terminus, the 354-residue chain is NADH-quinone oxidoreductase subunit H (354 aa).

Helical transmembrane passes span 22–42 (ILIR…YLIL), 91–111 (YLVA…VIPF), 124–144 (LLYV…AGWA), 162–182 (VSYE…SGSL), 203–223 (LLSW…ISGV), 250–270 (GMTF…ISTM), 291–311 (IPGF…FIWI), and 326–346 (LGWK…AIWI).

The protein belongs to the complex I subunit 1 family. As to quaternary structure, NDH-1 is composed of 14 different subunits. Subunits NuoA, H, J, K, L, M, N constitute the membrane sector of the complex.

Its subcellular location is the cell inner membrane. The catalysed reaction is a quinone + NADH + 5 H(+)(in) = a quinol + NAD(+) + 4 H(+)(out). Functionally, NDH-1 shuttles electrons from NADH, via FMN and iron-sulfur (Fe-S) centers, to quinones in the respiratory chain. The immediate electron acceptor for the enzyme in this species is believed to be ubiquinone. Couples the redox reaction to proton translocation (for every two electrons transferred, four hydrogen ions are translocated across the cytoplasmic membrane), and thus conserves the redox energy in a proton gradient. This subunit may bind ubiquinone. This chain is NADH-quinone oxidoreductase subunit H, found in Cupriavidus metallidurans (strain ATCC 43123 / DSM 2839 / NBRC 102507 / CH34) (Ralstonia metallidurans).